The primary structure comprises 227 residues: PKHD-type hydroxylase NE2125 (227 aa).

A Fe2OG dioxygenase domain is found at 78–179 (KIVPPFFNRY…RLACFMFIQS (102 aa)). 3 residues coordinate Fe cation: His97, Asp99, and His160. 2-oxoglutarate is bound at residue Arg170.

Fe(2+) is required as a cofactor. Requires L-ascorbate as cofactor.

This is PKHD-type hydroxylase NE2125 from Nitrosomonas europaea (strain ATCC 19718 / CIP 103999 / KCTC 2705 / NBRC 14298).